The sequence spans 101 residues: Protein S100-A4 (101 aa).

An N-acetylalanine modification is found at Ala-2. Residue Lys-7 is modified to N6-acetyllysine. EF-hand domains follow at residues 12–47 (MVSTFHKYSGKEGDKFKLNKSELKELLTRELPSFLG) and 50–85 (TDEAAFQKLMSNLDSNRDNEVDFQEYCVFLSCIAMM). Lys-28 and Glu-33 together coordinate Ca(2+). Residue Lys-35 is modified to N6-acetyllysine. Asp-63, Asn-65, Asp-67, Glu-69, and Glu-74 together coordinate Ca(2+).

This sequence belongs to the S-100 family. In terms of assembly, homodimer. Interacts with PPFIBP1 in a calcium-dependent mode. Interacts with PGLYRP1; this complex acts as a chemoattractant that promotes lymphocyte movement. Interacts with MYH9; this interaction increases cell motility. Interacts with Annexin 2/ANXA2. Interacts with TP53; this interaction promotes TP53 degradation. Interacts with CCR5. Interacts with FCGR3A; this interaction inhibits PKC-dependent phosphorylation of FCGR3A. In terms of tissue distribution, ubiquitously expressed.

The protein resides in the secreted. It localises to the nucleus. Its subcellular location is the cytoplasm. Functionally, calcium-binding protein that plays a role in various cellular processes including motility, angiogenesis, cell differentiation, apoptosis, and autophagy. Increases cell motility and invasiveness by interacting with non-muscle myosin heavy chain (NMMHC) IIA/MYH9. Mechanistically, promotes filament depolymerization and increases the amount of soluble myosin-IIA, resulting in the formation of stable protrusions facilitating chemotaxis. Also modulates the pro-apoptotic function of TP53 by binding to its C-terminal transactivation domain within the nucleus and reducing its protein levels. Within the extracellular space, stimulates cytokine production including granulocyte colony-stimulating factor and CCL24 from T-lymphocytes. In addition, stimulates T-lymphocyte chemotaxis by acting as a chemoattractant complex with PGLYRP1 that promotes lymphocyte migration via CCR5 and CXCR3 receptors. In Homo sapiens (Human), this protein is Protein S100-A4 (S100A4).